The chain runs to 214 residues: Dual specificity phosphatase 29 (214 aa).

The region spanning 46–194 (HVNEVWPNLY…LRELDIELAL (149 aa)) is the Tyrosine-protein phosphatase domain. 138–145 (HCAMGRSR) provides a ligand contact to substrate. The active-site Phosphocysteine intermediate is the Cys139.

Belongs to the protein-tyrosine phosphatase family. Non-receptor class dual specificity subfamily.

The protein resides in the cytoplasm. Its subcellular location is the nucleus. The catalysed reaction is O-phospho-L-tyrosyl-[protein] + H2O = L-tyrosyl-[protein] + phosphate. It carries out the reaction O-phospho-L-seryl-[protein] + H2O = L-seryl-[protein] + phosphate. The enzyme catalyses O-phospho-L-threonyl-[protein] + H2O = L-threonyl-[protein] + phosphate. In terms of biological role, dual specificity phosphatase able to dephosphorylate phosphotyrosine, phosphoserine and phosphothreonine residues within the same substrate, with a preference for phosphotyrosine as a substrate. Involved in the modulation of AMPK and MAPK1/2 signaling pathways. The polypeptide is Dual specificity phosphatase 29 (DUSP29) (Gallus gallus (Chicken)).